Reading from the N-terminus, the 224-residue chain is tRNA (guanine-N(7)-)-methyltransferase (224 aa).

4 residues coordinate S-adenosyl-L-methionine: Glu-54, Glu-79, Glu-106, and Asp-129. Asp-129 is an active-site residue. The substrate site is built by Lys-133 and Asp-165.

Belongs to the class I-like SAM-binding methyltransferase superfamily. TrmB family.

The catalysed reaction is guanosine(46) in tRNA + S-adenosyl-L-methionine = N(7)-methylguanosine(46) in tRNA + S-adenosyl-L-homocysteine. It participates in tRNA modification; N(7)-methylguanine-tRNA biosynthesis. Its function is as follows. Catalyzes the formation of N(7)-methylguanine at position 46 (m7G46) in tRNA. This is tRNA (guanine-N(7)-)-methyltransferase from Chlamydia abortus (strain DSM 27085 / S26/3) (Chlamydophila abortus).